Here is a 146-residue protein sequence, read N- to C-terminus: Ribonuclease H (146 aa).

The region spanning 4–145 (ELNKVVIYTD…ADMLARSQIV (142 aa)) is the RNase H type-1 domain. The Mg(2+) site is built by D13, E51, D73, and D137.

The protein belongs to the RNase H family. Monomer. The cofactor is Mg(2+).

Its subcellular location is the cytoplasm. It carries out the reaction Endonucleolytic cleavage to 5'-phosphomonoester.. In terms of biological role, endonuclease that specifically degrades the RNA of RNA-DNA hybrids. This is Ribonuclease H from Ehrlichia chaffeensis (strain ATCC CRL-10679 / Arkansas).